The following is a 493-amino-acid chain: BICD family-like cargo adapter 2 (493 aa).

2 coiled-coil regions span residues 56–275 (ELGK…ELHM) and 365–431 (MQHV…LLST).

The protein belongs to the BICDR family.

The chain is BICD family-like cargo adapter 2 (bicdl2) from Xenopus laevis (African clawed frog).